Reading from the N-terminus, the 207-residue chain is Large ribosomal subunit protein bL9 (207 aa).

Positions 162–176 (QKKEEKAKDEVSATE) are enriched in basic and acidic residues. The interval 162 to 207 (QKKEEKAKDEVSATEKDEELMLSSVTNDNDGDGAKEIVVEGTEESQ) is disordered.

The protein belongs to the bacterial ribosomal protein bL9 family.

Its function is as follows. Binds to the 23S rRNA. The protein is Large ribosomal subunit protein bL9 of Ehrlichia ruminantium (strain Gardel).